The sequence spans 419 residues: Serine hydroxymethyltransferase (419 aa).

Residues leucine 121 and 125–127 (GHL) each bind (6S)-5,6,7,8-tetrahydrofolate. Residue lysine 229 is modified to N6-(pyridoxal phosphate)lysine. Residue 354-356 (SPF) participates in (6S)-5,6,7,8-tetrahydrofolate binding.

The protein belongs to the SHMT family. Homodimer. Requires pyridoxal 5'-phosphate as cofactor.

It is found in the cytoplasm. It catalyses the reaction (6R)-5,10-methylene-5,6,7,8-tetrahydrofolate + glycine + H2O = (6S)-5,6,7,8-tetrahydrofolate + L-serine. Its pathway is one-carbon metabolism; tetrahydrofolate interconversion. It functions in the pathway amino-acid biosynthesis; glycine biosynthesis; glycine from L-serine: step 1/1. Catalyzes the reversible interconversion of serine and glycine with tetrahydrofolate (THF) serving as the one-carbon carrier. This reaction serves as the major source of one-carbon groups required for the biosynthesis of purines, thymidylate, methionine, and other important biomolecules. Also exhibits THF-independent aldolase activity toward beta-hydroxyamino acids, producing glycine and aldehydes, via a retro-aldol mechanism. In Coxiella burnetii (strain RSA 493 / Nine Mile phase I), this protein is Serine hydroxymethyltransferase.